The primary structure comprises 167 residues: MSDENNQQDAQQAAGGPQFAIQRIYLKDLSFETPMGVEAFTKAFKPNIQQDLNIQANQVEEGLFEVVLLLTVTARTDNRAVFLVEIKQAGLFAIGGLEGGAVTQLINTACPQILFPYAREAIDSILNRGSFPPLMLPPINFDAVFVQAISQAQQQAETEKAQGETIN.

Belongs to the SecB family. As to quaternary structure, homotetramer, a dimer of dimers. One homotetramer interacts with 1 SecA dimer.

The protein resides in the cytoplasm. In terms of biological role, one of the proteins required for the normal export of preproteins out of the cell cytoplasm. It is a molecular chaperone that binds to a subset of precursor proteins, maintaining them in a translocation-competent state. It also specifically binds to its receptor SecA. This is Protein-export protein SecB from Cellvibrio japonicus (strain Ueda107) (Pseudomonas fluorescens subsp. cellulosa).